The sequence spans 294 residues: Large ribosomal subunit protein uL2 (294 aa).

Disordered regions lie at residues 1 to 37 (MGIR…RPEK) and 228 to 294 (GSVM…RAAQ). Polar residues predominate over residues 10–22 (TPSTRHMTVSNFE). Residues 23 to 37 (ELSRDENGKRPRPEK) show a composition bias toward basic and acidic residues. Residues 264–285 (KTRKRNKPSNKFIVRGRRRGGR) show a composition bias toward basic residues.

The protein belongs to the universal ribosomal protein uL2 family. Part of the 50S ribosomal subunit. Forms a bridge to the 30S subunit in the 70S ribosome.

Its function is as follows. One of the primary rRNA binding proteins. Required for association of the 30S and 50S subunits to form the 70S ribosome, for tRNA binding and peptide bond formation. It has been suggested to have peptidyltransferase activity; this is somewhat controversial. Makes several contacts with the 16S rRNA in the 70S ribosome. The protein is Large ribosomal subunit protein uL2 of Synechococcus sp. (strain JA-3-3Ab) (Cyanobacteria bacterium Yellowstone A-Prime).